Consider the following 95-residue polypeptide: uncharacterized protein (95 aa).

This is an uncharacterized protein from Dictyostelium discoideum (Social amoeba).